Consider the following 34-residue polypeptide: MSDIN-like toxin proprotein 3 (34 aa).

Residues 1-10 constitute a propeptide that is removed on maturation; sequence MSDINTARLP. Positions 11–20 form a cross-link, cyclopeptide (Phe-Pro); sequence FFQPPEFRPP. Residues 21–34 constitute a propeptide that is removed on maturation; sequence CVGDDIEMVLTRGE.

This sequence belongs to the MSDIN fungal toxin family. Processed by the macrocyclase-peptidase enzyme POPB to yield a toxic cyclic decapeptide. POPB first removes 10 residues from the N-terminus. Conformational trapping of the remaining peptide forces the enzyme to release this intermediate rather than proceed to macrocyclization. The enzyme rebinds the remaining peptide in a different conformation and catalyzes macrocyclization of the N-terminal 10 residues.

Its function is as follows. Probable toxin that belongs to the MSDIN-like toxin family responsible for a large number of food poisoning cases and deaths. The sequence is that of MSDIN-like toxin proprotein 3 from Amanita bisporigera (Destroying angel).